We begin with the raw amino-acid sequence, 87 residues long: Small ribosomal subunit protein bS20 (87 aa).

The protein belongs to the bacterial ribosomal protein bS20 family.

Its function is as follows. Binds directly to 16S ribosomal RNA. This Corynebacterium urealyticum (strain ATCC 43042 / DSM 7109) protein is Small ribosomal subunit protein bS20.